The sequence spans 299 residues: ATP phosphoribosyltransferase (299 aa).

This sequence belongs to the ATP phosphoribosyltransferase family. Long subfamily. Equilibrium between an active dimeric form, an inactive hexameric form and higher aggregates. Interconversion between the various forms is largely reversible and is influenced by the natural substrates and inhibitors of the enzyme. The cofactor is Mg(2+).

It localises to the cytoplasm. It catalyses the reaction 1-(5-phospho-beta-D-ribosyl)-ATP + diphosphate = 5-phospho-alpha-D-ribose 1-diphosphate + ATP. It functions in the pathway amino-acid biosynthesis; L-histidine biosynthesis; L-histidine from 5-phospho-alpha-D-ribose 1-diphosphate: step 1/9. Its activity is regulated as follows. Feedback inhibited by histidine. Its function is as follows. Catalyzes the condensation of ATP and 5-phosphoribose 1-diphosphate to form N'-(5'-phosphoribosyl)-ATP (PR-ATP). Has a crucial role in the pathway because the rate of histidine biosynthesis seems to be controlled primarily by regulation of HisG enzymatic activity. This chain is ATP phosphoribosyltransferase, found in Pectobacterium atrosepticum (strain SCRI 1043 / ATCC BAA-672) (Erwinia carotovora subsp. atroseptica).